Here is a 219-residue protein sequence, read N- to C-terminus: Cytidylate kinase (219 aa).

Residue 10–18 (GPAAAGKST) participates in ATP binding.

Belongs to the cytidylate kinase family. Type 1 subfamily.

Its subcellular location is the cytoplasm. The catalysed reaction is CMP + ATP = CDP + ADP. It catalyses the reaction dCMP + ATP = dCDP + ADP. The polypeptide is Cytidylate kinase (Staphylococcus aureus (strain bovine RF122 / ET3-1)).